Consider the following 147-residue polypeptide: Cilia- and flagella-associated protein 90 (147 aa).

The interval Met-1–Leu-36 is disordered.

In terms of assembly, microtubule inner protein component of sperm flagellar doublet microtubules.

It localises to the cytoplasm. The protein localises to the cytoskeleton. Its subcellular location is the cilium axoneme. It is found in the flagellum axoneme. Its function is as follows. Microtubule inner protein (MIP) part of the dynein-decorated doublet microtubules (DMTs) in cilia axoneme, which is required for motile cilia beating. The sequence is that of Cilia- and flagella-associated protein 90 from Homo sapiens (Human).